A 218-amino-acid polypeptide reads, in one-letter code: Pyridoxine/pyridoxamine 5'-phosphate oxidase (218 aa).

Residues 12–15 and Arg-70 each bind substrate; that span reads RLSY. FMN-binding positions include 65-70, 80-81, Lys-87, and Gln-109; these read RTVLLR and YT. 3 residues coordinate substrate: Tyr-127, Arg-131, and Ser-135. FMN-binding positions include 145–146 and Trp-191; that span reads QS. 197-199 contributes to the substrate binding site; the sequence is RLH. Position 201 (Arg-201) interacts with FMN.

The protein belongs to the pyridoxamine 5'-phosphate oxidase family. In terms of assembly, homodimer. FMN is required as a cofactor.

It catalyses the reaction pyridoxamine 5'-phosphate + O2 + H2O = pyridoxal 5'-phosphate + H2O2 + NH4(+). The catalysed reaction is pyridoxine 5'-phosphate + O2 = pyridoxal 5'-phosphate + H2O2. Its pathway is cofactor metabolism; pyridoxal 5'-phosphate salvage; pyridoxal 5'-phosphate from pyridoxamine 5'-phosphate: step 1/1. It participates in cofactor metabolism; pyridoxal 5'-phosphate salvage; pyridoxal 5'-phosphate from pyridoxine 5'-phosphate: step 1/1. Functionally, catalyzes the oxidation of either pyridoxine 5'-phosphate (PNP) or pyridoxamine 5'-phosphate (PMP) into pyridoxal 5'-phosphate (PLP). This chain is Pyridoxine/pyridoxamine 5'-phosphate oxidase, found in Acinetobacter baumannii (strain AB0057).